Reading from the N-terminus, the 337-residue chain is Metacaspase III c (337 aa).

Propeptides lie at residues 1–6 (MGFLRR) and 116–125 (VPPAATGTRR). Residue Cys202 is modified to Cysteine sulfenic acid (-SOH). Residues Cys202 and Cys259 are joined by a disulfide bond. His207 is an active-site residue. Ca(2+)-binding residues include Asp224, Asp240, and Asp241. Cys264 is an active-site residue. Asp271 is a Ca(2+) binding site. Positions 290–337 (NFDFKKLLGKFGIDDFDKFGGEALGKINGDALGKVGKDALGKLNKFFG) are excised as a propeptide.

It belongs to the peptidase C14B family. In terms of processing, auto-proteolytic cleavage into a large and a small subunit which probably remain associated by non-covalent bonds. Following oxidative stress, the oxidation of Cys-202 leads to the formation of a disulfide bond between Cys-202 and Cys-259 which enhances catalytic activity.

With respect to regulation, activated by Ca(2+). Cysteine protease that cleaves specifically after arginine residues. This Phaeodactylum tricornutum (strain CCAP 1055/1) protein is Metacaspase III c.